The primary structure comprises 224 residues: Ribonuclease 3 (224 aa).

The region spanning 5 to 127 is the RNase III domain; it reads LERLCRRLNY…ILAAIYLDGG (123 aa). Mg(2+) is bound at residue Glu-40. The active site involves Asp-44. Mg(2+) contacts are provided by Asp-113 and Glu-116. Residue Glu-116 is part of the active site. Residues 154–224 enclose the DRBM domain; that stretch reads DAKTQLQEFL…AKAMLEQLQG (71 aa).

This sequence belongs to the ribonuclease III family. In terms of assembly, homodimer. Mg(2+) serves as cofactor.

The protein resides in the cytoplasm. The enzyme catalyses Endonucleolytic cleavage to 5'-phosphomonoester.. In terms of biological role, digests double-stranded RNA. Involved in the processing of primary rRNA transcript to yield the immediate precursors to the large and small rRNAs (23S and 16S). Processes some mRNAs, and tRNAs when they are encoded in the rRNA operon. Processes pre-crRNA and tracrRNA of type II CRISPR loci if present in the organism. The polypeptide is Ribonuclease 3 (Legionella pneumophila subsp. pneumophila (strain Philadelphia 1 / ATCC 33152 / DSM 7513)).